Consider the following 500-residue polypeptide: NAD(P)H-quinone oxidoreductase chain 4, chloroplastic (500 aa).

The next 14 membrane-spanning stretches (helical) occupy residues 4 to 24 (FPWL…IFFL), 37 to 57 (ICIC…HFQL), 87 to 107 (IGPI…AWPV), 113 to 130 (LFHF…GSFS), 134 to 154 (LLLF…LLSM), 167 to 187 (FILY…GIGL), 207 to 227 (IALE…KSPI), 242 to 262 (HYST…YGLV), 272 to 292 (AHSL…IYAA), 305 to 325 (IAYS…SITD), 330 to 350 (GAIL…FLAG), 386 to 406 (LALP…GIIT), 411 to 431 (FLMA…LTPI), and 462 to 482 (LFVS…PDFL).

Belongs to the complex I subunit 4 family.

The protein resides in the plastid. The protein localises to the chloroplast thylakoid membrane. The enzyme catalyses a plastoquinone + NADH + (n+1) H(+)(in) = a plastoquinol + NAD(+) + n H(+)(out). The catalysed reaction is a plastoquinone + NADPH + (n+1) H(+)(in) = a plastoquinol + NADP(+) + n H(+)(out). This chain is NAD(P)H-quinone oxidoreductase chain 4, chloroplastic, found in Carica papaya (Papaya).